Reading from the N-terminus, the 178-residue chain is Large ribosomal subunit protein uL6 (178 aa).

The protein belongs to the universal ribosomal protein uL6 family. In terms of assembly, part of the 50S ribosomal subunit.

Functionally, this protein binds to the 23S rRNA, and is important in its secondary structure. It is located near the subunit interface in the base of the L7/L12 stalk, and near the tRNA binding site of the peptidyltransferase center. The sequence is that of Large ribosomal subunit protein uL6 from Campylobacter jejuni subsp. jejuni serotype O:2 (strain ATCC 700819 / NCTC 11168).